The sequence spans 976 residues: Probable basic-leucine zipper transcription factor Q (976 aa).

Coiled-coil stretches lie at residues 57–110 and 136–287; these read AIDS…QYQQ and QQQQ…QQQQ. The disordered stretch occupies residues 104-128; the sequence is YQQQYQQPYTTPSPPDQIDYNQQLS. 2 stretches are compositionally biased toward polar residues: residues 374-385 and 393-411; these read TNFNGTNNSTPN and KLSS…SPPS. Residues 374-499 form a disordered region; the sequence is TNFNGTNNST…PIDSNGDFDL (126 aa). Composition is skewed to low complexity over residues 420 to 468 and 476 to 490; these read PKNN…FNNN and STTT…MTSP. In terms of domain architecture, bZIP spans 504-567; sequence EKKKSISRIN…GVEVMRPEPE (64 aa). The segment at 505–507 is basic motif; the sequence is KKK. Positions 509 to 516 are leucine-zipper; sequence ISRINQNL. Over residues 855–938 the composition is skewed to low complexity; the sequence is ENQSNNFGNN…VNSNNNNFNN (84 aa). A disordered region spans residues 855–957; sequence ENQSNNFGNN…SADAIPYPST (103 aa).

Belongs to the bZIP family.

It localises to the nucleus. Functionally, probable transcriptional regulator. The polypeptide is Probable basic-leucine zipper transcription factor Q (bzpQ) (Dictyostelium discoideum (Social amoeba)).